The primary structure comprises 395 residues: S-adenosylmethionine synthase 2 (395 aa).

E9 provides a ligand contact to Mg(2+). H15 is a binding site for ATP. E43 serves as a coordination point for K(+). E56 and Q99 together coordinate L-methionine. ATP contacts are provided by residues 167-169, 235-238, D246, 252-253, A269, K273, and K277; these read DGK, SGRF, and RK. D246 contacts L-methionine. K277 serves as a coordination point for L-methionine.

Belongs to the AdoMet synthase family. In terms of assembly, homotetramer. The cofactor is Mn(2+). It depends on Mg(2+) as a cofactor. Requires Co(2+) as cofactor. K(+) is required as a cofactor.

The protein resides in the cytoplasm. It carries out the reaction L-methionine + ATP + H2O = S-adenosyl-L-methionine + phosphate + diphosphate. It functions in the pathway amino-acid biosynthesis; S-adenosyl-L-methionine biosynthesis; S-adenosyl-L-methionine from L-methionine: step 1/1. Its function is as follows. Catalyzes the formation of S-adenosylmethionine from methionine and ATP. The reaction comprises two steps that are both catalyzed by the same enzyme: formation of S-adenosylmethionine (AdoMet) and triphosphate, and subsequent hydrolysis of the triphosphate. The polypeptide is S-adenosylmethionine synthase 2 (METK2) (Suaeda salsa (Seepweed)).